We begin with the raw amino-acid sequence, 283 residues long: Elongation factor Ts (283 aa).

The interval 79 to 82 is involved in Mg(2+) ion dislocation from EF-Tu; sequence TDFV.

The protein belongs to the EF-Ts family.

Its subcellular location is the cytoplasm. Its function is as follows. Associates with the EF-Tu.GDP complex and induces the exchange of GDP to GTP. It remains bound to the aminoacyl-tRNA.EF-Tu.GTP complex up to the GTP hydrolysis stage on the ribosome. This is Elongation factor Ts from Shewanella frigidimarina (strain NCIMB 400).